Consider the following 171-residue polypeptide: uncharacterized protein (171 aa).

2 disordered regions span residues 27–53 (DCPG…KMVL) and 82–108 (GHLE…PSSS). A compositionally biased stretch (polar residues) spans 32-50 (GNNNREPSISTRGRTSSSK).

This is an uncharacterized protein from Homo sapiens (Human).